The chain runs to 402 residues: 4-hydroxy-3-methylbut-2-enyl diphosphate reductase (402 aa).

Cys66 provides a ligand contact to [4Fe-4S] cluster. Residue His96 participates in (2E)-4-hydroxy-3-methylbut-2-enyl diphosphate binding. Residue His96 coordinates dimethylallyl diphosphate. His96 contacts isopentenyl diphosphate. Cys157 contacts [4Fe-4S] cluster. His185 contacts (2E)-4-hydroxy-3-methylbut-2-enyl diphosphate. Dimethylallyl diphosphate is bound at residue His185. His185 is an isopentenyl diphosphate binding site. Glu187 (proton donor) is an active-site residue. Residue Thr250 participates in (2E)-4-hydroxy-3-methylbut-2-enyl diphosphate binding. Cys288 serves as a coordination point for [4Fe-4S] cluster. (2E)-4-hydroxy-3-methylbut-2-enyl diphosphate is bound by residues Ser317, Ser318, Asn319, and Ser379. Residues Ser317, Ser318, Asn319, and Ser379 each contribute to the dimethylallyl diphosphate site. Isopentenyl diphosphate-binding residues include Ser317, Ser318, Asn319, and Ser379.

It belongs to the IspH family. The cofactor is [4Fe-4S] cluster.

It carries out the reaction isopentenyl diphosphate + 2 oxidized [2Fe-2S]-[ferredoxin] + H2O = (2E)-4-hydroxy-3-methylbut-2-enyl diphosphate + 2 reduced [2Fe-2S]-[ferredoxin] + 2 H(+). The enzyme catalyses dimethylallyl diphosphate + 2 oxidized [2Fe-2S]-[ferredoxin] + H2O = (2E)-4-hydroxy-3-methylbut-2-enyl diphosphate + 2 reduced [2Fe-2S]-[ferredoxin] + 2 H(+). It functions in the pathway isoprenoid biosynthesis; dimethylallyl diphosphate biosynthesis; dimethylallyl diphosphate from (2E)-4-hydroxy-3-methylbutenyl diphosphate: step 1/1. Its pathway is isoprenoid biosynthesis; isopentenyl diphosphate biosynthesis via DXP pathway; isopentenyl diphosphate from 1-deoxy-D-xylulose 5-phosphate: step 6/6. Catalyzes the conversion of 1-hydroxy-2-methyl-2-(E)-butenyl 4-diphosphate (HMBPP) into a mixture of isopentenyl diphosphate (IPP) and dimethylallyl diphosphate (DMAPP). Acts in the terminal step of the DOXP/MEP pathway for isoprenoid precursor biosynthesis. In Nostoc punctiforme (strain ATCC 29133 / PCC 73102), this protein is 4-hydroxy-3-methylbut-2-enyl diphosphate reductase.